A 46-amino-acid chain; its full sequence is Delta-actitoxin-Avd1d (46 aa).

Cystine bridges form between C4/C44, C6/C34, and C27/C45.

This sequence belongs to the sea anemone sodium channel inhibitory toxin family. Type I subfamily.

The protein resides in the secreted. Its subcellular location is the nematocyst. Binds specifically to voltage-gated sodium channels (Nav), thereby delaying their inactivation during signal transduction. Thus it strongly stimulates mammalian cardiac muscle contraction. This chain is Delta-actitoxin-Avd1d, found in Anemonia sulcata (Mediterranean snakelocks sea anemone).